Reading from the N-terminus, the 270-residue chain is UPF0354 protein BcerKBAB4_4524 (270 aa).

Belongs to the UPF0354 family.

In Bacillus mycoides (strain KBAB4) (Bacillus weihenstephanensis), this protein is UPF0354 protein BcerKBAB4_4524.